Here is a 203-residue protein sequence, read N- to C-terminus: MSSKLRVGVAGPVGSGKTALVETLCLSMNKNYEIAVVTNDIYTKEDANFLINKKVLEEGRIIGVETGGCPHTAIREDCSLNKNAVLDLENKYNPLDFVFVESGGDNLASSFSPELVDLSIYVIDVSAGDKIPRKGGPGITRSDLLLINKIDLADKVGADLNIMKSDTEFMRKGKPWFFTNLSSGMGVEEIIQFLESHIPNNRN.

GTP is bound at residue 11–18 (GPVGSGKT).

The protein belongs to the SIMIBI class G3E GTPase family. UreG subfamily. Homodimer. UreD, UreF and UreG form a complex that acts as a GTP-hydrolysis-dependent molecular chaperone, activating the urease apoprotein by helping to assemble the nickel containing metallocenter of UreC. The UreE protein probably delivers the nickel.

The protein resides in the cytoplasm. Functionally, facilitates the functional incorporation of the urease nickel metallocenter. This process requires GTP hydrolysis, probably effectuated by UreG. The polypeptide is Urease accessory protein UreG (Prochlorococcus marinus (strain AS9601)).